Here is a 264-residue protein sequence, read N- to C-terminus: S-adenosylmethionine decarboxylase proenzyme (264 aa).

The active-site Schiff-base intermediate with substrate; via pyruvic acid is Ser113. Ser113 carries the post-translational modification Pyruvic acid (Ser); by autocatalysis. Residue His118 is the Proton acceptor; for processing activity of the active site. Cys141 serves as the catalytic Proton donor; for catalytic activity.

This sequence belongs to the prokaryotic AdoMetDC family. Type 2 subfamily. Heterooctamer of four alpha and four beta chains arranged as a tetramer of alpha/beta heterodimers. It depends on pyruvate as a cofactor. Post-translationally, is synthesized initially as an inactive proenzyme. Formation of the active enzyme involves a self-maturation process in which the active site pyruvoyl group is generated from an internal serine residue via an autocatalytic post-translational modification. Two non-identical subunits are generated from the proenzyme in this reaction, and the pyruvate is formed at the N-terminus of the alpha chain, which is derived from the carboxyl end of the proenzyme. The post-translation cleavage follows an unusual pathway, termed non-hydrolytic serinolysis, in which the side chain hydroxyl group of the serine supplies its oxygen atom to form the C-terminus of the beta chain, while the remainder of the serine residue undergoes an oxidative deamination to produce ammonia and the pyruvoyl group blocking the N-terminus of the alpha chain.

The enzyme catalyses S-adenosyl-L-methionine + H(+) = S-adenosyl 3-(methylsulfanyl)propylamine + CO2. It participates in amine and polyamine biosynthesis; S-adenosylmethioninamine biosynthesis; S-adenosylmethioninamine from S-adenosyl-L-methionine: step 1/1. Functionally, catalyzes the decarboxylation of S-adenosylmethionine to S-adenosylmethioninamine (dcAdoMet), the propylamine donor required for the synthesis of the polyamines spermine and spermidine from the diamine putrescine. The protein is S-adenosylmethionine decarboxylase proenzyme of Hahella chejuensis (strain KCTC 2396).